A 68-amino-acid polypeptide reads, in one-letter code: Protein SlyX homolog (68 aa).

The protein belongs to the SlyX family.

In Pseudomonas putida (strain ATCC 700007 / DSM 6899 / JCM 31910 / BCRC 17059 / LMG 24140 / F1), this protein is Protein SlyX homolog.